A 114-amino-acid polypeptide reads, in one-letter code: MSDDVALPLQFTDAAANKVKSLIADEDNPNLKLRVYITGGGCSGFQYGFTFDDQVNEGDMTIEKQGVGLVVDPMSLQYLVGGSVDYTEGLEGSRFIVTNPNAKSTCGCGSSFSI.

Residues C42, C106, and C108 each coordinate iron-sulfur cluster.

This sequence belongs to the HesB/IscA family. Homodimer. It depends on iron-sulfur cluster as a cofactor.

In terms of biological role, required for insertion of 4Fe-4S clusters for at least IspG. The sequence is that of Iron-sulfur cluster insertion protein ErpA from Salmonella typhi.